The chain runs to 190 residues: Capsid protein (190 aa).

Residue M1 is modified to N-acetylmethionine; by host.

This sequence belongs to the tymoviruses capsid protein family.

The protein resides in the virion. Functionally, self-assembles to form a T=3 icosahedral capsid composed of 180 copies of the capsid protein. The capsid encapsulates the single-stranded RNA genome. The sequence is that of Capsid protein from Atropa belladonna (Belladonna).